We begin with the raw amino-acid sequence, 523 residues long: 2-isopropylmalate synthase (523 aa).

Positions 5 to 267 (VIIFDTTLRD…HTAINHQEIW (263 aa)) constitute a Pyruvate carboxyltransferase domain. Positions 14, 202, 204, and 238 each coordinate Mn(2+). The regulatory domain stretch occupies residues 392–523 (RLDYFSVQSG…QHNENNKETV (132 aa)).

Belongs to the alpha-IPM synthase/homocitrate synthase family. LeuA type 1 subfamily. As to quaternary structure, homodimer. It depends on Mn(2+) as a cofactor.

Its subcellular location is the cytoplasm. It catalyses the reaction 3-methyl-2-oxobutanoate + acetyl-CoA + H2O = (2S)-2-isopropylmalate + CoA + H(+). It participates in amino-acid biosynthesis; L-leucine biosynthesis; L-leucine from 3-methyl-2-oxobutanoate: step 1/4. Its function is as follows. Catalyzes the condensation of the acetyl group of acetyl-CoA with 3-methyl-2-oxobutanoate (2-ketoisovalerate) to form 3-carboxy-3-hydroxy-4-methylpentanoate (2-isopropylmalate). This Escherichia coli O127:H6 (strain E2348/69 / EPEC) protein is 2-isopropylmalate synthase.